The primary structure comprises 102 residues: MKFSKLSLTLALILTQALLVVCGKINEDFMENGLESHALHDEIRKPIDTEKADAERGVLDCVVNTLGCSSDKDCCGMTPSCTLGICAPSVGGIVGGLLGRAL.

Residues 1–23 (MKFSKLSLTLALILTQALLVVCG) form the signal peptide. A propeptide spanning residues 24-56 (KINEDFMENGLESHALHDEIRKPIDTEKADAER) is cleaved from the precursor. 3 disulfides stabilise this stretch: C61/C75, C68/C81, and C74/C86. The residue at position 98 (L98) is a Leucine amide. Positions 100-102 (RAL) are excised as a propeptide.

The protein belongs to the neurotoxin 15 family. 02 (omega-actx) subfamily. Expressed by the venom gland.

It is found in the secreted. Functionally, potent inhibitor of insect, but not mammalian, voltage-gated calcium channels (Cav). This is Omega-hexatoxin-Hi2a from Hadronyche infensa (Fraser island funnel-web spider).